A 38-amino-acid chain; its full sequence is Cytochrome b6-f complex subunit 5 (38 aa).

The chain crosses the membrane as a helical span at residues 5-25; sequence LLSGIVLGLIPITLAGLFVTA.

The protein belongs to the PetG family. The 4 large subunits of the cytochrome b6-f complex are cytochrome b6, subunit IV (17 kDa polypeptide, PetD), cytochrome f and the Rieske protein, while the 4 small subunits are PetG, PetL, PetM and PetN. The complex functions as a dimer.

The protein resides in the plastid. The protein localises to the chloroplast thylakoid membrane. Functionally, component of the cytochrome b6-f complex, which mediates electron transfer between photosystem II (PSII) and photosystem I (PSI), cyclic electron flow around PSI, and state transitions. PetG is required for either the stability or assembly of the cytochrome b6-f complex. The sequence is that of Cytochrome b6-f complex subunit 5 from Adiantum capillus-veneris (Maidenhair fern).